Consider the following 616-residue polypeptide: Kelch-like protein 36 (616 aa).

Positions 46 to 113 (CDVVLVADEQ…LYGGELVLDG (68 aa)) constitute a BTB domain. One can recognise a BACK domain in the interval 148-250 (YLYLQELASI…PKNDLLHRVK (103 aa)). Kelch repeat units lie at residues 296 to 345 (CLLF…VLGG), 346 to 397 (FIFI…SIED), 398 to 444 (MLVA…IYKD), 446 to 493 (VYIS…SLGD), 494 to 546 (SIYS…VWEG), and 547 to 595 (RIYI…VCAL).

Interacts with CUL3.

The protein operates within protein modification; protein ubiquitination. Probable substrate-specific adapter of an E3 ubiquitin-protein ligase complex which mediates the ubiquitination and subsequent proteasomal degradation of target proteins. The protein is Kelch-like protein 36 (KLHL36) of Bos taurus (Bovine).